The following is a 994-amino-acid chain: Chloride channel protein 1 (994 aa).

Topologically, residues 1–118 are cytoplasmic; sequence MERSQSQRHG…VLRRKLGEDW (118 aa). The helical transmembrane segment at 119–150 threads the bilayer; it reads IFLVLLGLLMALVSWCMDYVSAKSLQAYKWTY. Topologically, residues 151 to 158 are extracellular; it reads AQMKPSLP. The helical transmembrane segment at 159-179 threads the bilayer; sequence LQYLAWVTFPLILILFSALFC. Topologically, residues 180 to 183 are cytoplasmic; it reads QLIS. Residues 184 to 189 constitute an intramembrane region (note=Loop between two helices); it reads PQAVGS. Residues 188–192 carry the Selectivity filter part_1 motif; the sequence is GSGIP. S189 contributes to the chloride binding site. The segment at residues 190–195 is an intramembrane region (helical); the sequence is GIPEMK. The Cytoplasmic portion of the chain corresponds to 196–208; it reads TILRGVVLKEYLT. The segment at residues 209–224 is an intramembrane region (helical); it reads LKAFVAKVVALTAGLG. An intramembrane region (note=Loop between two helices) is located at residues 225–230; it reads SGIPVG. Residues 230 to 234 carry the Selectivity filter part_2 motif; that stretch reads GKEGP. The helical intramembrane region spans 231 to 246; that stretch reads KEGPFVHIASICAAVL. At 247–268 the chain is on the cytoplasmic side; that stretch reads SKFMSMFSGVYEQPYYYTDILT. Intramembrane regions (helical) lie at residues 269-280 and 281-290; these read VGCAVGVGCCFG and TPLGGVLFSI. At 291-301 the chain is on the cytoplasmic side; sequence EVTSTYFAVRN. A helical transmembrane segment spans residues 302–321; sequence YWRGFFAATFSAFVFRVLAV. At 322–347 the chain is on the extracellular side; that stretch reads WNKDAVTITALFRTNFRMDFPFDLKE. A helical transmembrane segment spans residues 348–376; sequence LPAFAVIGICCGFLGAVFVYLHRQVMLGV. Residues 377–390 lie on the Cytoplasmic side of the membrane; the sequence is RKHKCLSQFLAKHR. The chain crosses the membrane as a helical span at residues 391–408; that stretch reads LLYPGIVTFVIASLTFPP. Over 409-414 the chain is Extracellular; sequence GMGQFM. An intramembrane region (note=Loop between two helices) is located at residues 415-418; it reads AGEL. The segment at residues 419 to 426 is an intramembrane region (helical); it reads MPREAIST. At 427–457 the chain is on the extracellular side; it reads LFDNNTWVKHIGDPQSLGQSAVWLHPQVNVI. An intramembrane region (helical) is located at residues 458-475; it reads IIILLFFVMKFWMSIVAT. The segment at residues 476–482 is an intramembrane region (note=Loop between two helices); the sequence is TMPIPCG. Residues 482–486 carry the Selectivity filter part_3 motif; that stretch reads GGFMP. Positions 483–498 form an intramembrane region, helical; it reads GFMPVFVLGAAFGRLV. A chloride-binding site is contributed by F484. Topologically, residues 499–521 are extracellular; sequence GEIMAMLFPEGILFDDIIYKILP. The helical intramembrane region spans 522-538; it reads GGYAVIGAAALTGAVSH. An intramembrane region (note=Loop between two helices) is located at residues 539–540; the sequence is TV. The segment at residues 541–554 is an intramembrane region (helical); that stretch reads STAVICFELTGQIA. The Extracellular segment spans residues 555-557; that stretch reads HIL. The helical intramembrane region spans 558–571; the sequence is PMMVAVILANMVAQ. Positions 572–575 form an intramembrane region, note=Loop between two helices; sequence SLQP. Positions 576 to 578 form an intramembrane region, helical; it reads SLY. Y578 contributes to the chloride binding site. Residues 579–994 are Cytoplasmic-facing; sequence DSIIQVKKLP…DEEDEDELIL (416 aa). The 60-residue stretch at 609–668 folds into the CBS 1 domain; it reads MVRDVKFVSASCTYGELRNLLQATTVKTLPLVDSKDSMILLGSVERSELQSLLQRHLCAE. The disordered stretch occupies residues 710 to 770; sequence EDEDEDLSRK…PEASDSADQR (61 aa). Residues 725–739 show a composition bias toward pro residues; sequence TPAPPPPSPPPPPSQ. Residues 827-882 form the CBS 2 domain; it reads IDQSPFQLVEQTTLHKTHTLFSLLGLHLAYVTSMGKLRGVLALEELQKAIEGHTKS. Disordered stretches follow at residues 886 to 954 and 971 to 994; these read LRPP…ARAE and ELADILHGPSLRSTDEEDEDELIL. Residue S892 is modified to Phosphoserine. Over residues 933–943 the composition is skewed to pro residues; sequence PETPVPPPSPE. Positions 985-994 are enriched in acidic residues; the sequence is DEEDEDELIL.

Belongs to the chloride channel (TC 2.A.49) family. ClC-1/CLCN1 subfamily. As to quaternary structure, homodimer. In terms of tissue distribution, predominantly expressed in skeletal muscles.

Its subcellular location is the cell membrane. The protein resides in the sarcolemma. The protein localises to the T-tubule. The enzyme catalyses chloride(in) = chloride(out). The catalysed reaction is thiocyanate(in) = thiocyanate(out). It carries out the reaction bromide(in) = bromide(out). It catalyses the reaction nitrate(in) = nitrate(out). The enzyme catalyses iodide(out) = iodide(in). With respect to regulation, modulated by membrane voltage with depolarization favouring channel opening and hyperpolarization favouring channel closure. Inhibited by acidic pH and ATP binding due to a shift of voltage dependence of common gating to more positive voltages. Inhibited by 9-anthracene-carboxylic. Voltage-gated chloride channel involved in skeletal muscle excitability. Generates most of the plasma membrane chloride conductance in skeletal muscle fibers, stabilizes the resting membrane potential and contributes to the repolarization phase during action potential firing. Forms a homodimeric channel where each subunit has its own ion conduction pathway. Conducts double-barreled currents controlled by two types of gates, two fast glutamate gates that control each subunit independently and a slow common gate that opens and shuts off both subunits simultaneously. Has a significant open probability at muscle resting potential and is further activated upon membrane depolarization. Permeable to small monovalent anions with ion selectivity for chloride &gt; thiocyanate &gt; bromide &gt; nitrate &gt; iodide. The polypeptide is Chloride channel protein 1 (Clcn1) (Mus musculus (Mouse)).